The sequence spans 186 residues: 3-hydroxyanthranilate 3,4-dioxygenase (186 aa).

O2 is bound at residue Arg-44. The Fe cation site is built by His-48, Glu-54, and His-96. Glu-54 provides a ligand contact to substrate. The substrate site is built by Arg-100 and Glu-110. A divalent metal cation-binding residues include Cys-125, Cys-130, Cys-164, and Cys-167.

Belongs to the 3-HAO family. It depends on Fe(2+) as a cofactor.

The protein localises to the cytoplasm. It carries out the reaction 3-hydroxyanthranilate + O2 = (2Z,4Z)-2-amino-3-carboxymuconate 6-semialdehyde. Its pathway is cofactor biosynthesis; NAD(+) biosynthesis; quinolinate from L-kynurenine: step 3/3. Catalyzes the oxidative ring opening of 3-hydroxyanthranilate to 2-amino-3-carboxymuconate semialdehyde, which spontaneously cyclizes to quinolinate. The protein is 3-hydroxyanthranilate 3,4-dioxygenase of Chaetomium globosum (strain ATCC 6205 / CBS 148.51 / DSM 1962 / NBRC 6347 / NRRL 1970) (Soil fungus).